The sequence spans 164 residues: Axial regulator YABBY 5 (164 aa).

A C4-type zinc finger spans residues cysteine 16–cysteine 43.

This sequence belongs to the YABBY family. As to quaternary structure, binds to LUG and LUH; these complexes promote adaxial cell identity in leaves as well as embryonic shoot apical meristem (SAM) initiation and postembryonic SAM maintenance. Interacts with SPL/NZZ and SPEAR2.

It is found in the nucleus. In terms of biological role, promotes adaxial cell identity. Regulates the initiation of embryonic shoot apical meristem (SAM) development. The chain is Axial regulator YABBY 5 (YAB5) from Arabidopsis thaliana (Mouse-ear cress).